Consider the following 151-residue polypeptide: Small ribosomal subunit protein uS15 (151 aa).

The segment covering 1-11 has biased composition (basic residues); that stretch reads MPHRSRHKKGR. The segment at 1 to 24 is disordered; it reads MPHRSRHKKGRSSSVRPPHPTVPT.

This sequence belongs to the universal ribosomal protein uS15 family. Part of the 30S ribosomal subunit.

The sequence is that of Small ribosomal subunit protein uS15 from Pyrobaculum calidifontis (strain DSM 21063 / JCM 11548 / VA1).